The following is a 110-amino-acid chain: uncharacterized protein (110 aa).

The protein resides in the mitochondrion. This is an uncharacterized protein from Arabidopsis thaliana (Mouse-ear cress).